Reading from the N-terminus, the 289-residue chain is ATP synthase gamma chain (289 aa).

It belongs to the ATPase gamma chain family. In terms of assembly, F-type ATPases have 2 components, CF(1) - the catalytic core - and CF(0) - the membrane proton channel. CF(1) has five subunits: alpha(3), beta(3), gamma(1), delta(1), epsilon(1). CF(0) has three main subunits: a, b and c.

It is found in the cell inner membrane. Produces ATP from ADP in the presence of a proton gradient across the membrane. The gamma chain is believed to be important in regulating ATPase activity and the flow of protons through the CF(0) complex. In Haemophilus influenzae (strain ATCC 51907 / DSM 11121 / KW20 / Rd), this protein is ATP synthase gamma chain.